The chain runs to 279 residues: MTTRIDTKFAELKAEGRPALVTYFMGGDPDLETALKVMKALPKAGADVIELGMPFSDPMADGPAIQAAGLRALNAGQTLAKTLYMAAKFRKEDDTTPIVMMGYYNLIYIYGVERFLTDAKASGVDGLIVVDLPSEMDAELCIPAMKAGINFIRLTTPTTDDKRLPKVLHNSSGFVYYVSMNGITGAAIADTAKVGEAVRHIKKSTDLPICVGFGVKTPEQAAAIATHADGVVVGTAIVNAIAGELDEKGKVKGDPVAAATRLVHALAESVRATRLEAAQ.

Active-site proton acceptor residues include Glu50 and Asp61.

The protein belongs to the TrpA family. As to quaternary structure, tetramer of two alpha and two beta chains.

The catalysed reaction is (1S,2R)-1-C-(indol-3-yl)glycerol 3-phosphate + L-serine = D-glyceraldehyde 3-phosphate + L-tryptophan + H2O. The protein operates within amino-acid biosynthesis; L-tryptophan biosynthesis; L-tryptophan from chorismate: step 5/5. In terms of biological role, the alpha subunit is responsible for the aldol cleavage of indoleglycerol phosphate to indole and glyceraldehyde 3-phosphate. In Brucella melitensis biotype 2 (strain ATCC 23457), this protein is Tryptophan synthase alpha chain.